Consider the following 546-residue polypeptide: MATTQVEIQRPIANFSPSLWGDQFIKNDSGAKAAEKHCKAVEELKKEVMNMITAGGSNLVEAMNLIDTLERLGISYHFEKEIDQKLNHFFNLNTDYSDEFYDLYTVSLHFRLFRQHGHRISSDIFGRWIDESGKFKEGLKTDGKGLLSLYEASYLRTRGETILDDALEFATATLNSIAPHLESPLSKQVVHALIQPLHYGNPRIEAHNFISIYEENQDKNEFLLKFAKLDYNLLQMLHKEELHEVSRWWKELDLVSKLPYARDRVVECFFWAMGVYHEPQYSRARIMLTKTITMTSIIDDTYDAYGVIEELDIFTEAIERWNIEEMDRLPEYVKPFYKALLELYEQFEEELAEEGRSYAAHYAIESLKELVRSYHVEAKWFIQGYLPPFEEYLKNALITCTYCYHTTTSLLGVESAVEEDFQWLAKKPKMLVAGLLICRVIDDIATYEVEKERGQSATGIESYMRDNNATIEEAVAKFFEIATDAWKDINEECLMPSPYSRDVLMRILNLERIIDVTYKGNEDGYTQPEKVLKPHIIALFVDPIKM.

Residues aspartate 299, aspartate 303, aspartate 442, threonine 446, and glutamate 450 each coordinate Mg(2+). The short motif at aspartate 299–aspartate 303 is the DDXXD motif element.

It belongs to the terpene synthase family. Tpsa subfamily. As to quaternary structure, monomer. Requires Mg(2+) as cofactor. In terms of tissue distribution, highly expressed in leaves. Expressed at levels in flowers.

The catalysed reaction is (2E,6E)-farnesyl diphosphate = (-)-5-epi-eremophilene + diphosphate. It participates in secondary metabolite biosynthesis; terpenoid biosynthesis. In terms of biological role, sesquiterpene synthase that catalyzes the conversion of farnesyl diphosphate to (-)-5-epi-eremophilene. This Salvia miltiorrhiza (Chinese sage) protein is (-)-5-epieremophilene synthase STPS2.